The following is a 2603-amino-acid chain: Ankyrin repeat domain-containing protein 17 (2603 aa).

Met-1 carries the post-translational modification N-acetylmethionine. The span at 1–32 (MEKATVPAAAEGEGSPPAAAAVAAPPAAAAAE) shows a compositional bias: low complexity. Residues 1–127 (MEKATVPAAA…DDDEEEEVSE (127 aa)) form a disordered region. Residues Ser-15 and Ser-42 each carry the phosphoserine modification. Over residues 68–77 (PHHKAKRNRT) the composition is skewed to basic residues. Positions 82 to 92 (SSSESSSDSDN) are enriched in low complexity. Gly residues predominate over residues 93 to 107 (SGGGGGGGGGGGGGT). The span at 112-127 (SEEEEDDDDEEEEVSE) shows a compositional bias: acidic residues. Ser-152 is modified (phosphoserine). ANK repeat units follow at residues 229 to 258 (SDNR…SVNE), 262 to 291 (EGES…NVED), 296 to 325 (GDIT…DVNA), 329 to 358 (TGNT…SIED), 362 to 391 (NGHT…GINT), 396 to 425 (FKES…DQEH), 429 to 458 (EMHT…QVNM), 462 to 491 (SFES…SLEE), 495 to 524 (EGYT…NINA), 529 to 558 (TQET…DIEL), 559 to 588 (GCST…NVHA), 592 to 621 (TGDT…DLEH), 625 to 654 (GGRT…NVNR), 659 to 688 (NDHT…DPTH), and 692 to 721 (DGST…NLLA). A Glycyl lysine isopeptide (Lys-Gly) (interchain with G-Cter in SUMO2) cross-link involves residue Lys-314. A disordered region spans residues 770–792 (VRSKAASKQKSNSHLPANSQDVQ). The segment covering 775–792 (ASKQKSNSHLPANSQDVQ) has biased composition (polar residues). Residue Ser-799 is modified to Phosphoserine. ANK repeat units follow at residues 1078–1107 (NHDT…SIEH), 1111–1140 (KGFT…DIEA), 1145–1174 (TKDT…NKEH), 1178–1207 (SDYT…EINS), 1213–1242 (LGIS…DINA), 1247–1276 (NRNT…NVEH), 1280–1309 (TGLT…DVNA), 1315–1344 (SRDT…HIDV), 1348–1377 (KGNT…DVDA), and 1381–1410 (RKIT…QFPS). The stretch at 1438–1522 (VQAKDRQAAE…EKEKLKVEEE (85 aa)) forms a coiled coil. The residue at position 1453 (Ser-1453) is a Phosphoserine. Disordered stretches follow at residues 1475 to 1496 (AKRE…RKLE) and 1513 to 1713 (EKEK…PKRE). Positions 1477–1487 (REKRKEKRRKK) are enriched in basic residues. Composition is skewed to low complexity over residues 1526 to 1546 (LTEP…TWTT), 1598 to 1607 (ESKSSSTSES), and 1616 to 1636 (SSCS…NHAS). Ser-1631 is modified (phosphoserine). Composition is skewed to polar residues over residues 1638–1648 (VVTTTMASKKQ) and 1671–1699 (LSET…SPNG). Ser-1692, Ser-1696, and Ser-1705 each carry phosphoserine. Residues 1721–1785 (RRSKKVSVPS…ESTRQATQLI (65 aa)) form the KH domain. Arg-1870 carries the asymmetric dimethylarginine modification. 3 disordered regions span residues 1902-1991 (PRLP…PSVR), 2007-2195 (TTVT…SSSA), and 2269-2327 (VSSQ…YGSV). Composition is skewed to low complexity over residues 1946 to 1989 (SNQN…SSPS) and 2007 to 2024 (TTVT…TNAT). Phosphoserine occurs at positions 2038, 2040, 2041, 2043, 2055, and 2063. Composition is skewed to low complexity over residues 2068–2077 (ASASEQEASS), 2087–2108 (RPPH…QQPP), and 2175–2189 (PPSH…TPAP). Residues 2269 to 2298 (VSSQSTPESMLSGKSSYLPNSDPLHQSDTS) are compositionally biased toward polar residues. The segment covering 2303–2313 (FRPPLQRPAPS) has biased composition (pro residues). Ser-2373 is subject to Phosphoserine. The tract at residues 2378–2447 (LTPCSSASNE…TGTSAPSVIG (70 aa)) is disordered. Positions 2379–2391 (TPCSSASNESPAQ) are enriched in polar residues. Over residues 2392–2411 (SVSSGVRAPSPAPSSVPLGS) the composition is skewed to low complexity. Ser-2401 carries the post-translational modification Phosphoserine. Positions 2435 to 2447 (IRQTGTSAPSVIG) are enriched in polar residues.

As to quaternary structure, interacts (via N-terminus) with NOD2. Interacts with CDK2, MCM3, MCM5, MCM7, CDC6 and PCNA. Interacts with MAVS and IFIH1. Interacts (via the second ankyrin repeat cluster) with RIGI. Post-translationally, phosphorylated by CDK2. Highly expressed in fetal liver. Detected in adult liver cells, ovarian oocytes, seminiferous tubules of the testes and pelvic region of the kidney. It was not detected in heart, gut, lung, spleen and skeletal muscle. Earliest specific in situ marker of hepatic differentiation during embryogenesis, useful for characterization of inductive events involved in hepatic specification.

Its subcellular location is the cytoplasm. The protein resides in the nucleus. Functionally, could play pivotal roles in cell cycle and DNA regulation. Involved in innate immune defense against viruse by positively regulating the viral dsRNA receptors RIGI and IFIH1 signaling pathways. Involves in NOD2- and NOD1-mediated responses to bacteria suggesting a role in innate antibacterial immune pathways too. Could play a central role for the formation and/or maintenance of the blood vessels of the circulation system. The protein is Ankyrin repeat domain-containing protein 17 (Ankrd17) of Mus musculus (Mouse).